The primary structure comprises 546 residues: MFS-type transporter GME11371 (546 aa).

Helical transmembrane passes span 39–59 (LTYL…DLTI), 77–96 (IGWY…SSWG), 107–127 (MFLL…AAPT), 137–157 (ITGI…AFAV), 167–187 (GGLA…GGVL), 195–215 (WCFY…FLFF), and 240–260 (FPGF…LLWG). The N-linked (GlcNAc...) asparagine glycan is linked to Asn267. 7 consecutive transmembrane segments (helical) span residues 270 to 290 (DVIG…VVEW), 307 to 327 (VVLF…VLVY), 349 to 369 (LPYI…ISAT), 370 to 390 (GYFT…AGLI), 402 to 422 (WIGY…PPIL), 433 to 453 (VAAT…FMVS), and 509 to 529 (ISFA…IFMP).

This sequence belongs to the major facilitator superfamily.

The protein resides in the cell membrane. It participates in secondary metabolite biosynthesis. Functionally, MFS-type transporter; part of the gene cluster that mediates the biosynthesis of dibenzodioxocinones such as pestalotiollide B, a novel class of inhibitors against cholesterol ester transfer protein (CEPT). essential for dibenzodioxocinones biosynthesis and may be involved in the secretion of the cluster products. The chain is MFS-type transporter GME11371 from Pestalotiopsis microspora.